The primary structure comprises 288 residues: Elongation factor Ts (288 aa).

An involved in Mg(2+) ion dislocation from EF-Tu region spans residues 82 to 85; that stretch reads TDFV.

The protein belongs to the EF-Ts family.

Its subcellular location is the cytoplasm. Its function is as follows. Associates with the EF-Tu.GDP complex and induces the exchange of GDP to GTP. It remains bound to the aminoacyl-tRNA.EF-Tu.GTP complex up to the GTP hydrolysis stage on the ribosome. This Prosthecochloris aestuarii (strain DSM 271 / SK 413) protein is Elongation factor Ts.